A 96-amino-acid polypeptide reads, in one-letter code: ATP-dependent Clp protease adapter protein ClpS (96 aa).

The protein belongs to the ClpS family. In terms of assembly, binds to the N-terminal domain of the chaperone ClpA.

Involved in the modulation of the specificity of the ClpAP-mediated ATP-dependent protein degradation. This Campylobacter jejuni subsp. jejuni serotype O:2 (strain ATCC 700819 / NCTC 11168) protein is ATP-dependent Clp protease adapter protein ClpS.